The following is a 161-amino-acid chain: Regulator of ribonuclease activity A (161 aa).

Belongs to the RraA family. In terms of assembly, homotrimer. Binds to both RNA-binding sites in the C-terminal region of Rne and to RhlB.

The protein resides in the cytoplasm. Functionally, globally modulates RNA abundance by binding to RNase E (Rne) and regulating its endonucleolytic activity. Can modulate Rne action in a substrate-dependent manner by altering the composition of the degradosome. Modulates RNA-binding and helicase activities of the degradosome. The polypeptide is Regulator of ribonuclease activity A (Shewanella sediminis (strain HAW-EB3)).